A 674-amino-acid chain; its full sequence is Translation factor GUF1, mitochondrial (674 aa).

The N-terminal 48 residues, 1–48 (MRGCLQPARWLTTATLRRPLLSCPRQLPTRYNPFPRPFHHAPVLQARQ), are a transit peptide targeting the mitochondrion. The tr-type G domain occupies 66–246 (ERYRNFCIVA…AIIESIPALL (181 aa)). Residues 75–82 (AHVDHGKS), 139–143 (DTPGH), and 193–196 (NKVD) contribute to the GTP site.

The protein belongs to the TRAFAC class translation factor GTPase superfamily. Classic translation factor GTPase family. LepA subfamily.

The protein localises to the mitochondrion inner membrane. It catalyses the reaction GTP + H2O = GDP + phosphate + H(+). In terms of biological role, promotes mitochondrial protein synthesis. May act as a fidelity factor of the translation reaction, by catalyzing a one-codon backward translocation of tRNAs on improperly translocated ribosomes. Binds to mitochondrial ribosomes in a GTP-dependent manner. This chain is Translation factor GUF1, mitochondrial, found in Arthroderma otae (strain ATCC MYA-4605 / CBS 113480) (Microsporum canis).